Here is a 216-residue protein sequence, read N- to C-terminus: MOB kinase activator 3C (216 aa).

Zn(2+) contacts are provided by C82, C87, H164, and H169.

It belongs to the MOB1/phocein family.

May regulate the activity of kinases. The polypeptide is MOB kinase activator 3C (MOB3C) (Bos taurus (Bovine)).